The primary structure comprises 366 residues: Probable UDP-arabinopyranose mutase 2 (366 aa).

The DXD motif signature appears at 104 to 106 (DDD). R152 carries N-linked (Glc...) arginine glycosylation.

It belongs to the RGP family. Homopentamer or homohexamer. The cofactor is Mn(2+). Mg(2+) is required as a cofactor. In terms of processing, reversibly glycosylated by UDP-glucose, UDP-xylose and UDP-galactose, but not UDP-mannose. In terms of tissue distribution, expressed in all tissues tested, including root, tuber, leaf, petiole, shoot, stolon and stem.

It is found in the secreted. The protein resides in the cell wall. Its subcellular location is the cell junction. The protein localises to the plasmodesma. It localises to the golgi apparatus. It catalyses the reaction UDP-beta-L-arabinofuranose = UDP-beta-L-arabinopyranose. Functionally, probable UDP-L-arabinose mutase involved in the biosynthesis of cell wall non-cellulosic polysaccharides. Was initially shown to possess an autoglycosylating activity which is dependent on the presence of UDP-glucose and manganese. This Solanum tuberosum (Potato) protein is Probable UDP-arabinopyranose mutase 2.